We begin with the raw amino-acid sequence, 737 residues long: LIMR family protein R05D3.2 (737 aa).

Residues Ala-280–Val-293 are compositionally biased toward acidic residues. Residues Ala-280–Asp-416 form a disordered region. Residues Glu-303 to Asp-318 show a composition bias toward basic and acidic residues.

The protein belongs to the LIMR family.

This is LIMR family protein R05D3.2 from Caenorhabditis elegans.